The following is a 387-amino-acid chain: Peroxisomal membrane protein LPX1 (387 aa).

The interval 385–387 (QKL) is peroxisomal targeting signal type 1.

Its subcellular location is the peroxisome matrix. Functionally, has acyl esterase, lipase and phospholipase A activity. This chain is Peroxisomal membrane protein LPX1 (LPX1), found in Saccharomyces cerevisiae (strain ATCC 204508 / S288c) (Baker's yeast).